The following is a 160-amino-acid chain: uncharacterized protein (160 aa).

The Extracellular segment spans residues 1–33 (MPLRPCRHHQGFLPKKQWRAKFPQLIVLMGRVA). A helical membrane pass occupies residues 34-54 (AEELLPAVAVAAVVVAVVVAV). Residues 55–68 (ERVVPLLFVHRPDS) are Cytoplasmic-facing. A helical transmembrane segment spans residues 69–89 (FFLIFFFQSCFVCCCCCCSCS). The Extracellular segment spans residues 90 to 119 (TSLKAYSSEKEKQKYGKRGNGNTPLVQRLV). The helical transmembrane segment at 120-140 (TLSYLALLILVLSIELLTWFV) threads the bilayer. The Cytoplasmic segment spans residues 141–160 (KKQRTGNKKQKDKEKNALLL).

The protein resides in the membrane. This is an uncharacterized protein from Saccharomyces cerevisiae (strain ATCC 204508 / S288c) (Baker's yeast).